The primary structure comprises 1135 residues: LRR receptor-like serine/threonine-protein kinase RGI2 (1135 aa).

Positions methionine 1 to alanine 35 are cleaved as a signal peptide. Over serine 36 to arginine 723 the chain is Extracellular. A disulfide bond links cysteine 69 and cysteine 76. Asparagine 101 and asparagine 117 each carry an N-linked (GlcNAc...) asparagine glycan. LRR repeat units lie at residues phenylalanine 105–cysteine 129, serine 130–leucine 153, lysine 154–cysteine 177, and serine 179–threonine 203. Short sequence motifs (small peptide recognition) lie at residues phenylalanine 186–aspartate 187, arginine 208–glycine 211, valine 231–alanine 236, and tyrosine 259. LRR repeat units lie at residues cysteine 226–leucine 250, serine 251–cysteine 274, glutamate 276–leucine 298, glutamine 299–lysine 323, leucine 325–asparagine 345, leucine 346–cysteine 370, lysine 372–lysine 395, leucine 397–cysteine 418, glutamine 419–leucine 442, asparagine 444–cysteine 466, threonine 467–leucine 490, glutamine 491–cysteine 514, glutamine 516–leucine 538, threonine 539–leucine 562, serine 564–cysteine 586, threonine 587–isoleucine 610, aspartate 612–alanine 634, leucine 635–leucine 658, and glutamate 659–glutamine 683. The N-linked (GlcNAc...) asparagine glycan is linked to asparagine 273. Residues phenylalanine 281–tyrosine 283 carry the Small peptide recognition motif. Residues aspartate 329–methionine 332 carry the Small peptide recognition motif. The N-linked (GlcNAc...) asparagine glycan is linked to asparagine 345. Residues glutamate 351–methionine 353 carry the Small peptide recognition motif. Asparagine 358 and asparagine 369 each carry an N-linked (GlcNAc...) asparagine glycan. 2 consecutive short sequence motifs (small peptide recognition) follow at residues isoleucine 399–tryptophan 403 and aspartate 425–glutamine 428. N-linked (GlcNAc...) asparagine glycosylation is present at asparagine 444. The Small peptide recognition motif lies at lysine 447–isoleucine 451. Asparagine 465 carries an N-linked (GlcNAc...) asparagine glycan. A Small peptide recognition motif is present at residues arginine 471–arginine 473. Asparagine 492, asparagine 502, asparagine 521, and asparagine 524 each carry an N-linked (GlcNAc...) asparagine glycan. Asparagine 598 and asparagine 618 each carry an N-linked (GlcNAc...) asparagine glycan. N-linked (GlcNAc...) asparagine glycans are attached at residues asparagine 665 and asparagine 707. Residues isoleucine 724–valine 744 traverse the membrane as a helical segment. The Cytoplasmic segment spans residues isoleucine 745–lysine 1135. At threonine 777 the chain carries Phosphothreonine. The 282-residue stretch at leucine 785–isoleucine 1066 folds into the Protein kinase domain. ATP-binding positions include isoleucine 791 to valine 799 and lysine 813. 2 positions are modified to phosphotyrosine: tyrosine 868 and tyrosine 907. Aspartate 920 acts as the Proton acceptor in catalysis. 2 positions are modified to phosphotyrosine: tyrosine 963 and tyrosine 970. Residues aspartate 1077–lysine 1135 are disordered. Residues serine 1108–serine 1128 show a composition bias toward low complexity.

The protein belongs to the protein kinase superfamily. Ser/Thr protein kinase family. As to quaternary structure, binds to RGF peptides such as RGF1, GLV5/CLEL1/RGF2, GLV7/CLEL3/RGF3, GLV3/RGF4, GLV10/CLEL7/RGF5 and RGF10/CLELN; these interactions trigger the formation of heterodimers with SERK1. Interacts with UBP13. In terms of processing, phosphorylated and ubiquitinated upon interaction with RGF1, thus leading to activation a subsequent degradation. Stabilized by UBP12 and UBP13-mediated deubiquitination. Autophosphorylated. As to expression, specific to root meristems, especially in lateral root meristems (LRM).

It localises to the membrane. The enzyme catalyses L-seryl-[protein] + ATP = O-phospho-L-seryl-[protein] + ADP + H(+). It carries out the reaction L-threonyl-[protein] + ATP = O-phospho-L-threonyl-[protein] + ADP + H(+). Together with RGI1, RGI3, RGI4 and RGI5, acts as a receptor of RGF peptides (e.g. RGF1, GLV5/CLEL1/RGF2, GLV7/CLEL3/RGF3, GLV3/RGF4, GLV10/CLEL7/RGF5 and RGF10/CLELN), peptide hormones which maintain the postembryonic root stem cell niche by regulating the expression levels and patterns of the transcription factor PLETHORA (PLT, e.g. PLT1 and PLT2). Links RGF peptides signal with their downstream components. The protein is LRR receptor-like serine/threonine-protein kinase RGI2 of Arabidopsis thaliana (Mouse-ear cress).